The primary structure comprises 166 residues: SUMO-conjugating enzyme UBC9 (166 aa).

Positions 4 to 157 (IAAGRLAEER…VKKEAVKYAA (154 aa)) constitute a UBC core domain. C93 acts as the Glycyl thioester intermediate in catalysis.

It belongs to the ubiquitin-conjugating enzyme family. As to quaternary structure, interacts with brd-1 and rad-51. Interacts with smo-1 and sop-2. Interacts with bet-1 (via BROMO domain 2). Interacts with isoforms 1 and 2 of X-box-binding protein xbp-1.

The protein resides in the nucleus envelope. The protein operates within protein modification; protein sumoylation. Functionally, accepts the ubiquitin-like protein smo-1 from the aos-1-uba-2 E1 complex and catalyzes its covalent attachment to other proteins with the help of an E3 ligase such as gei-17. Required to sumoylate the ETS transcription factor lin-1, Polycomb protein sop-2, and intermediate filament proteins, such as ifb-1. Required for embryonic development, fertility, vulval morphogenesis, inhibition of vulval cell fates, lifespan, and neuromuscular activity. The polypeptide is SUMO-conjugating enzyme UBC9 (Caenorhabditis elegans).